We begin with the raw amino-acid sequence, 271 residues long: Fork head domain-containing protein FD5 (271 aa).

The segment at residues Gln12–Leu103 is a DNA-binding region (fork-head).

As to expression, expressed in early embryogenesis in 14 symmetrical pairs of segmentally arranged neuroblasts and in developing peripheral nervous system. Also, later in embryogenesis, in a cluster of cells in head region.

The protein localises to the nucleus. Its function is as follows. Involved in development during embryogenesis. This Drosophila melanogaster (Fruit fly) protein is Fork head domain-containing protein FD5 (fd96Cb).